Reading from the N-terminus, the 376-residue chain is Methionine import ATP-binding protein MetN 2 (376 aa).

The interval M1–L25 is disordered. The region spanning V34 to L273 is the ABC transporter domain. Position 70–77 (G70–S77) interacts with ATP.

Belongs to the ABC transporter superfamily. Methionine importer (TC 3.A.1.24) family. In terms of assembly, the complex is composed of two ATP-binding proteins (MetN), two transmembrane proteins (MetI) and a solute-binding protein (MetQ).

It is found in the cell inner membrane. It catalyses the reaction L-methionine(out) + ATP + H2O = L-methionine(in) + ADP + phosphate + H(+). The catalysed reaction is D-methionine(out) + ATP + H2O = D-methionine(in) + ADP + phosphate + H(+). Its function is as follows. Part of the ABC transporter complex MetNIQ involved in methionine import. Responsible for energy coupling to the transport system. This chain is Methionine import ATP-binding protein MetN 2, found in Pseudomonas syringae pv. syringae (strain B728a).